A 573-amino-acid chain; its full sequence is Urease subunit alpha (573 aa).

Residues His139, His141, and Lys222 each contribute to the Ni(2+) site. Lys222 bears the N6-carboxylysine mark. Position 224 (His224) interacts with substrate. Ni(2+) contacts are provided by His251 and His277. His325 (proton donor) is an active-site residue. Asp365 is a binding site for Ni(2+).

The protein belongs to the metallo-dependent hydrolases superfamily. Urease alpha subunit family. As to quaternary structure, heterotrimer of UreA (gamma), UreB (beta) and UreC (alpha) subunits. Three heterotrimers associate to form the active enzyme. It depends on Ni cation as a cofactor. Post-translationally, carboxylation allows a single lysine to coordinate two nickel ions.

It is found in the cytoplasm. It carries out the reaction urea + 2 H2O + H(+) = hydrogencarbonate + 2 NH4(+). Its pathway is nitrogen metabolism; urea degradation; CO(2) and NH(3) from urea (urease route): step 1/1. This is Urease subunit alpha from Flavobacterium johnsoniae (strain ATCC 17061 / DSM 2064 / JCM 8514 / BCRC 14874 / CCUG 350202 / NBRC 14942 / NCIMB 11054 / UW101) (Cytophaga johnsonae).